The sequence spans 1228 residues: Clustered mitochondria protein homolog (1228 aa).

Residues 298 to 557 (PSSLPSNSID…DNNPLDVGFA (260 aa)) enclose the Clu domain. The TPR 1 repeat unit spans residues 486 to 519 (CYGFDEASNKVIADAEFGSSLDDFAKVFHLKKHE). Residues 671–702 (LGRVIELAEQELEAQRALREAHLQQVEADNKE) adopt a coiled-coil conformation. TPR repeat units lie at residues 982-1015 (AESY…YERV) and 1108-1141 (AVNE…FSKE).

This sequence belongs to the CLU family. In terms of assembly, may associate with the eukaryotic translation initiation factor 3 (eIF-3) complex.

It localises to the cytoplasm. Its function is as follows. mRNA-binding protein involved in proper cytoplasmic distribution of mitochondria. The protein is Clustered mitochondria protein homolog of Eremothecium gossypii (strain ATCC 10895 / CBS 109.51 / FGSC 9923 / NRRL Y-1056) (Yeast).